A 460-amino-acid chain; its full sequence is Telomere-binding protein homolog (460 aa).

It belongs to the telombin family.

It is found in the nucleus. It localises to the chromosome. Its subcellular location is the telomere. Its function is as follows. May bind telomeric T4G4 sequences. This is Telomere-binding protein homolog from Euplotes crassus.